We begin with the raw amino-acid sequence, 230 residues long: Uracil-DNA glycosylase (230 aa).

Catalysis depends on D72, which acts as the Proton acceptor.

The protein belongs to the uracil-DNA glycosylase (UDG) superfamily. UNG family.

The protein resides in the cytoplasm. It catalyses the reaction Hydrolyzes single-stranded DNA or mismatched double-stranded DNA and polynucleotides, releasing free uracil.. In terms of biological role, excises uracil residues from the DNA which can arise as a result of misincorporation of dUMP residues by DNA polymerase or due to deamination of cytosine. The polypeptide is Uracil-DNA glycosylase (Wolinella succinogenes (strain ATCC 29543 / DSM 1740 / CCUG 13145 / JCM 31913 / LMG 7466 / NCTC 11488 / FDC 602W) (Vibrio succinogenes)).